The chain runs to 780 residues: Ral guanine nucleotide dissociation stimulator-like 2 (780 aa).

The tract at residues 1–92 (MLPRPLRLLW…PTPPPRSSRR (92 aa)) is disordered. At S13 the chain carries Phosphoserine. The span at 31–42 (GGGPGGRGVGGG) shows a compositional bias: gly residues. The span at 43-65 (QEEEEEEEEDEAPVSVWDEEEDG) shows a compositional bias: acidic residues. The N-terminal Ras-GEF domain occupies 89 to 213 (SSRRLRAGTL…GSADLIRNLR (125 aa)). The 273-residue stretch at 244–516 (LADHLAEQLT…HRVSCEVEPP (273 aa)) folds into the Ras-GEF domain. A compositionally biased stretch (low complexity) spans 596-613 (HSLADPSHLSPPASSPRP). Disordered regions lie at residues 596–651 (HSLA…GASD) and 741–769 (TATLGLTSSPSASGTPPSEGGGGSFPRIK). The Ras-associating domain maps to 651–738 (DCRIIRVQME…HDFLLRQRRR (88 aa)). The span at 741 to 758 (TATLGLTSSPSASGTPPS) shows a compositional bias: low complexity.

As to quaternary structure, interacts with SAMD9.

Probable guanine nucleotide exchange factor. Putative effector of Ras and/or Rap. Associates with the GTP-bound form of Rap 1A and H-Ras in vitro. The protein is Ral guanine nucleotide dissociation stimulator-like 2 (RGL2) of Canis lupus familiaris (Dog).